The following is a 37-amino-acid chain: Large ribosomal subunit protein bL36 (37 aa).

Belongs to the bacterial ribosomal protein bL36 family.

In Acidithiobacillus ferrooxidans (strain ATCC 23270 / DSM 14882 / CIP 104768 / NCIMB 8455) (Ferrobacillus ferrooxidans (strain ATCC 23270)), this protein is Large ribosomal subunit protein bL36.